A 37-amino-acid polypeptide reads, in one-letter code: Large ribosomal subunit protein bL36c (37 aa).

This sequence belongs to the bacterial ribosomal protein bL36 family.

Its subcellular location is the plastid. It localises to the chloroplast. The sequence is that of Large ribosomal subunit protein bL36c from Cycas taitungensis (Prince sago).